A 350-amino-acid chain; its full sequence is Phenylalanine--tRNA ligase alpha subunit (350 aa).

Residue Glu-262 coordinates Mg(2+).

The protein belongs to the class-II aminoacyl-tRNA synthetase family. Phe-tRNA synthetase alpha subunit type 1 subfamily. Tetramer of two alpha and two beta subunits. Mg(2+) is required as a cofactor.

It is found in the cytoplasm. The enzyme catalyses tRNA(Phe) + L-phenylalanine + ATP = L-phenylalanyl-tRNA(Phe) + AMP + diphosphate + H(+). This is Phenylalanine--tRNA ligase alpha subunit (pheS) from Thermus thermophilus (strain ATCC 27634 / DSM 579 / HB8).